The sequence spans 1372 residues: DNA-directed RNA polymerase subunit beta' (1372 aa).

Positions 69, 71, 84, and 87 each coordinate Zn(2+). Mg(2+)-binding residues include aspartate 460, aspartate 462, and aspartate 464. Zn(2+) is bound by residues cysteine 808, cysteine 882, cysteine 889, and cysteine 892.

The protein belongs to the RNA polymerase beta' chain family. In terms of assembly, the RNAP catalytic core consists of 2 alpha, 1 beta, 1 beta' and 1 omega subunit. When a sigma factor is associated with the core the holoenzyme is formed, which can initiate transcription. It depends on Mg(2+) as a cofactor. Zn(2+) serves as cofactor.

It catalyses the reaction RNA(n) + a ribonucleoside 5'-triphosphate = RNA(n+1) + diphosphate. In terms of biological role, DNA-dependent RNA polymerase catalyzes the transcription of DNA into RNA using the four ribonucleoside triphosphates as substrates. The sequence is that of DNA-directed RNA polymerase subunit beta' from Rickettsia conorii (strain ATCC VR-613 / Malish 7).